A 167-amino-acid chain; its full sequence is Gametocyte-specific factor 1 (167 aa).

Residue S8 is modified to Phosphoserine. CHHC U11-48K-type zinc fingers lie at residues 14–41 and 48–75; these read LLQC…RKNH and LATC…DDKS. C17, H23, H33, C37, C51, H57, H67, and C71 together coordinate Zn(2+).

Belongs to the UPF0224 (FAM112) family. In terms of tissue distribution, expressed abundantly in adult testis, at moderate levels in unfertilized eggs and ovaries and weakly in embryonic stem cells.

The protein localises to the cytoplasm. Required for spermatogenesis and is involved in the suppression of retrotransposon transcription in male germ cells. The polypeptide is Gametocyte-specific factor 1 (Mus musculus (Mouse)).